We begin with the raw amino-acid sequence, 164 residues long: Histone H1 (164 aa).

The span at 1-10 (MAPRSSTSKS) shows a compositional bias: polar residues. The segment at 1–164 (MAPRSSTSKS…KKSSKPAKKN (164 aa)) is disordered. Over residues 16 to 27 (KDHKKAPIKKAI) the composition is skewed to basic residues. Phosphothreonine occurs at positions 47 and 54. Basic and acidic residues-rich tracts occupy residues 49–61 (VKKD…ADTK), 69–89 (TMKE…GDKK), and 117–156 (TKKE…DAKK).

In terms of processing, cell-growth/division-associated phosphorylation by a CDC2-like kinase.

It is found in the nucleus. The protein resides in the chromosome. Histones H1 are necessary for the condensation of nucleosome chains into higher-order structures. This chain is Histone H1 (HHO), found in Tetrahymena thermophila (strain SB210).